We begin with the raw amino-acid sequence, 1459 residues long: Peroxisomal ATPase PEX6 (1459 aa).

The segment covering 1 to 13 (MDFEQYGQSSQQP) has biased composition (low complexity). Disordered stretches follow at residues 1–28 (MDFEQYGQSSQQPRQRRRRAGKRRLNNK) and 316–410 (AAED…RPGR). Basic residues predominate over residues 14 to 26 (RQRRRRAGKRRLN). A compositionally biased stretch (low complexity) spans 327–348 (EMEVTSAAEESETEGSAGSMSD). Polar residues predominate over residues 396 to 405 (SVASNFTSAT). 1070–1077 (GPPGTGKT) provides a ligand contact to ATP. The interval 1357-1459 (IPEEAPTING…HLRNPMEEVE (103 aa)) is disordered. Positions 1391 to 1401 (STSGQSTTSSK) are enriched in low complexity. Over residues 1402 to 1413 (GKGKSVSKKGKS) the composition is skewed to basic residues. The segment covering 1421–1443 (GSVDGDDEDMADANSKEDEDEDD) has biased composition (acidic residues). The span at 1444 to 1459 (YVVRTDHLRNPMEEVE) shows a compositional bias: basic and acidic residues.

This sequence belongs to the AAA ATPase family. In terms of assembly, interacts with PEX1; forming the PEX1-PEX6 AAA ATPase complex, which is composed of a heterohexamer formed by a trimer of PEX1-PEX6 dimers.

Its subcellular location is the cytoplasm. It localises to the cytosol. The protein localises to the peroxisome membrane. The catalysed reaction is ATP + H2O = ADP + phosphate + H(+). Component of the PEX1-PEX6 AAA ATPase complex, a protein dislocase complex that mediates the ATP-dependent extraction of the PEX5 receptor from peroxisomal membranes, an essential step for PEX5 recycling. Specifically recognizes PEX5 monoubiquitinated at 'Cys-6', and pulls it out of the peroxisome lumen through the PEX2-PEX10-PEX12 retrotranslocation channel. Extraction by the PEX1-PEX6 AAA ATPase complex is accompanied by unfolding of the TPR repeats and release of bound cargo from PEX5. In Penicillium chrysogenum (Penicillium notatum), this protein is Peroxisomal ATPase PEX6 (pex6).